A 134-amino-acid chain; its full sequence is D-ribose pyranase (134 aa).

The active-site Proton donor is His-20. Substrate contacts are provided by residues Asp-28, His-99, and 123–125 (FSN).

Belongs to the RbsD / FucU family. RbsD subfamily. As to quaternary structure, homodecamer.

The protein localises to the cytoplasm. The enzyme catalyses beta-D-ribopyranose = beta-D-ribofuranose. It functions in the pathway carbohydrate metabolism; D-ribose degradation; D-ribose 5-phosphate from beta-D-ribopyranose: step 1/2. Its function is as follows. Catalyzes the interconversion of beta-pyran and beta-furan forms of D-ribose. The polypeptide is D-ribose pyranase (Staphylococcus carnosus (strain TM300)).